The following is a 103-amino-acid chain: Large ribosomal subunit protein uL24 (103 aa).

The protein belongs to the universal ribosomal protein uL24 family. Part of the 50S ribosomal subunit.

In terms of biological role, one of two assembly initiator proteins, it binds directly to the 5'-end of the 23S rRNA, where it nucleates assembly of the 50S subunit. Functionally, one of the proteins that surrounds the polypeptide exit tunnel on the outside of the subunit. In Glaesserella parasuis serovar 5 (strain SH0165) (Haemophilus parasuis), this protein is Large ribosomal subunit protein uL24.